Here is a 21-residue protein sequence, read N- to C-terminus: Basic phospholipase A2 BjIV (21 aa).

The protein belongs to the phospholipase A2 family. Group II subfamily. In terms of assembly, can form dimers, trimers and tetramers. Requires Ca(2+) as cofactor. In terms of processing, contains seven disulfide bonds. Expressed by the venom gland.

The protein resides in the secreted. It catalyses the reaction a 1,2-diacyl-sn-glycero-3-phosphocholine + H2O = a 1-acyl-sn-glycero-3-phosphocholine + a fatty acid + H(+). With respect to regulation, inhibited by crotapotin. In terms of biological role, snake venom phospholipase A2 has a high enzymatic activity and produces moderate myonecrosis in skeletal muscle, but shows no neuromuscular activity in mouse phrenic nerve-diaphragm preparations. PLA2 catalyzes the calcium-dependent hydrolysis of the 2-acyl groups in 3-sn-phosphoglycerides. In Bothrops jararacussu (Jararacussu), this protein is Basic phospholipase A2 BjIV.